A 153-amino-acid chain; its full sequence is 3-hydroxyacyl-[acyl-carrier-protein] dehydratase FabZ (153 aa).

Histidine 54 is an active-site residue.

This sequence belongs to the thioester dehydratase family. FabZ subfamily.

It localises to the cytoplasm. It catalyses the reaction a (3R)-hydroxyacyl-[ACP] = a (2E)-enoyl-[ACP] + H2O. Involved in unsaturated fatty acids biosynthesis. Catalyzes the dehydration of short chain beta-hydroxyacyl-ACPs and long chain saturated and unsaturated beta-hydroxyacyl-ACPs. In Shewanella frigidimarina (strain NCIMB 400), this protein is 3-hydroxyacyl-[acyl-carrier-protein] dehydratase FabZ.